Consider the following 300-residue polypeptide: MQFHSSSALITPFKKDLSVDEAAYEALIKRQIFQGMDACVPVGTTGESATLTHKEHMRCIEIAIETCKNTKTPSNSRMKVLAGVGSNATSESLSLAKFAQKIGADAILCVSPYYNRPTQQGLFEHYKTIAQSVEIPVMLYDVPSRTGVSIEVPTALKLFREIPNIKAIKEASGSLKRVTELHYHEKDFKIFSGEDSLNHSIMFSGGCGVISVTGNLMPNLISQMVNCALKLEYQQALEIQNKLFHLHQALFVETNPIPIKMAMHLAGLIENPSYRLPLVAPSKETIQLLEKTLQQYEVIA.

T45 serves as a coordination point for pyruvate. Y140 (proton donor/acceptor) is an active-site residue. The active-site Schiff-base intermediate with substrate is the K169. Residue I210 coordinates pyruvate.

Belongs to the DapA family. Homotetramer; dimer of dimers.

Its subcellular location is the cytoplasm. It catalyses the reaction L-aspartate 4-semialdehyde + pyruvate = (2S,4S)-4-hydroxy-2,3,4,5-tetrahydrodipicolinate + H2O + H(+). The protein operates within amino-acid biosynthesis; L-lysine biosynthesis via DAP pathway; (S)-tetrahydrodipicolinate from L-aspartate: step 3/4. In terms of biological role, catalyzes the condensation of (S)-aspartate-beta-semialdehyde [(S)-ASA] and pyruvate to 4-hydroxy-tetrahydrodipicolinate (HTPA). The protein is 4-hydroxy-tetrahydrodipicolinate synthase of Helicobacter pylori (strain P12).